Consider the following 258-residue polypeptide: Imidazole glycerol phosphate synthase subunit HisF (258 aa).

Catalysis depends on residues aspartate 11 and aspartate 130.

It belongs to the HisA/HisF family. As to quaternary structure, heterodimer of HisH and HisF.

It is found in the cytoplasm. It catalyses the reaction 5-[(5-phospho-1-deoxy-D-ribulos-1-ylimino)methylamino]-1-(5-phospho-beta-D-ribosyl)imidazole-4-carboxamide + L-glutamine = D-erythro-1-(imidazol-4-yl)glycerol 3-phosphate + 5-amino-1-(5-phospho-beta-D-ribosyl)imidazole-4-carboxamide + L-glutamate + H(+). It functions in the pathway amino-acid biosynthesis; L-histidine biosynthesis; L-histidine from 5-phospho-alpha-D-ribose 1-diphosphate: step 5/9. IGPS catalyzes the conversion of PRFAR and glutamine to IGP, AICAR and glutamate. The HisF subunit catalyzes the cyclization activity that produces IGP and AICAR from PRFAR using the ammonia provided by the HisH subunit. The protein is Imidazole glycerol phosphate synthase subunit HisF of Nitrobacter winogradskyi (strain ATCC 25391 / DSM 10237 / CIP 104748 / NCIMB 11846 / Nb-255).